The primary structure comprises 426 residues: Probable serine/threonine-protein kinase PBL2 (426 aa).

A disordered region spans residues 1–54; that stretch reads MGNCLDSSAKVDNSNHSPHANSASSGSKVSSKTSRSTGPSGLSTTSYSTDSSFG. Gly2 carries the N-myristoyl glycine lipid modification. The S-palmitoyl cysteine moiety is linked to residue Cys4. A compositionally biased stretch (low complexity) spans 14–38; sequence SNHSPHANSASSGSKVSSKTSRSTG. The segment covering 39–52 has biased composition (polar residues); the sequence is PSGLSTTSYSTDSS. Thr75 is subject to Phosphothreonine. Residues 86–369 enclose the Protein kinase domain; that stretch reads FRQDNLLGEG…SEVLVTLEQL (284 aa). Residues 92–100 and Lys124 each bind ATP; that span reads LGEGGFGCV. Position 169 is a phosphotyrosine (Tyr169). Asp219 serves as the catalytic Proton acceptor. Ser253 bears the O-UMP-serine mark. Residue Ser253 is modified to Phosphoserine. Phosphothreonine occurs at positions 254 and 259. Thr254 bears the O-UMP-threonine mark. Tyr267 carries the post-translational modification Phosphotyrosine. Residues 374–426 are disordered; the sequence is KPGTKHTQMESPRFHHSSVMQKSPVRYSHDRPLLHMTPGASPLPSYTQSPRVR. Polar residues predominate over residues 417-426; the sequence is PSYTQSPRVR.

This sequence belongs to the protein kinase superfamily. Ser/Thr protein kinase family. As to quaternary structure, interacts with FLS2. Interacts with the Xanthomonas campestris effector XopAC/AvrAC; the recognition of X.campestris effector XopAC/AvrAC requires the presence of RKS1 and RPP13L4/ZAR1. Component of a stable high-order oligomeric complex made of RKS1 and RPP13L4/ZAR1 which recruits X.campestris effector XopAC/AvrAC-mediated uridylylated PBL2 in the presence of ATP to form a wheel-like pentameric resistosome; this complex triggers immunity toward X.campestris in vascular tissues. Binds to RKS1 when uridylylated. In terms of processing, uridylylated at Ser-253 and Thr-254 by Xanthomonas campestris effector AvrAC/XopAC; this uridylylation is necessary for specific recruitment to RKS1 and to trigger immunity. Strongly expressed in leaves, moderately in roots, and barely in flowers, mostly in pedicels.

The protein resides in the cell membrane. It localises to the nucleus. It catalyses the reaction L-seryl-[protein] + ATP = O-phospho-L-seryl-[protein] + ADP + H(+). The catalysed reaction is L-threonyl-[protein] + ATP = O-phospho-L-threonyl-[protein] + ADP + H(+). Involved in disease resistance signaling. Contributes to pathogen-associated molecular pattern (PAMP)-triggered immunity (PTI) signaling and defense responses downstream of FLS2. Acts as a BIK1 decoy and enables Xanthomonas campestris AvrAC/XopAC detection; X.campestris effector AvrAC/XopAC-mediated uridylylation promotes the formation of a complex with RKS1 and RPP13L4/ZAR1 which, in turn, activates effector-triggered immunity (ETI) against X.campestris. Promotes, when uridylylated by AvrAC/XopAC, the release of ADP from the inactive RKS1-ZAR1 complex, thus activating the resistosome. The sequence is that of Probable serine/threonine-protein kinase PBL2 from Arabidopsis thaliana (Mouse-ear cress).